The primary structure comprises 529 residues: BAR/IMD domain-containing adapter protein 2-like 2 (529 aa).

Residues 1–239 (MAPEMDQFYR…HSPGLLGPAL (239 aa)) enclose the IMD domain. 2 disordered regions span residues 221–327 (EASR…GGAR) and 403–510 (TSMS…TNPF). A phosphoserine mark is found at Ser-231, Ser-272, and Ser-302. The span at 299–313 (SASSLYSGSAQSSRS) shows a compositional bias: low complexity. An SH3 domain is found at 324–387 (GGARRVRALV…PEAYVKALEE (64 aa)). Low complexity-rich tracts occupy residues 403–413 (TSMSPMTPMNP) and 452–462 (RSRTPSRVPSR). A compositionally biased stretch (pro residues) spans 463 to 472 (APSPAPPPLP). Residues Ser-478 and Ser-481 each carry the phosphoserine modification.

Expressed in the epithelial layer of the intestine (at protein level).

It localises to the cell membrane. Its subcellular location is the cell junction. It is found in the cytoplasmic vesicle membrane. Its function is as follows. Phosphoinositides-binding protein that induces the formation of planar or gently curved membrane structures. Binds to phosphoinositides, including to phosphatidylinositol 4,5-bisphosphate (PtdIns(4,5)P2) headgroups. There seems to be no clear preference for a specific phosphoinositide. The sequence is that of BAR/IMD domain-containing adapter protein 2-like 2 (BAIAP2L2) from Homo sapiens (Human).